Here is a 153-residue protein sequence, read N- to C-terminus: Endoribonuclease YbeY (153 aa).

Residues histidine 116, histidine 120, and histidine 126 each contribute to the Zn(2+) site.

It belongs to the endoribonuclease YbeY family. It depends on Zn(2+) as a cofactor.

The protein resides in the cytoplasm. Functionally, single strand-specific metallo-endoribonuclease involved in late-stage 70S ribosome quality control and in maturation of the 3' terminus of the 16S rRNA. The protein is Endoribonuclease YbeY of Paraburkholderia phytofirmans (strain DSM 17436 / LMG 22146 / PsJN) (Burkholderia phytofirmans).